A 305-amino-acid polypeptide reads, in one-letter code: UDP-3-O-acyl-N-acetylglucosamine deacetylase (305 aa).

Residues histidine 79, histidine 238, and aspartate 242 each contribute to the Zn(2+) site. The Proton donor role is filled by histidine 265.

This sequence belongs to the LpxC family. Requires Zn(2+) as cofactor.

It carries out the reaction a UDP-3-O-[(3R)-3-hydroxyacyl]-N-acetyl-alpha-D-glucosamine + H2O = a UDP-3-O-[(3R)-3-hydroxyacyl]-alpha-D-glucosamine + acetate. It participates in glycolipid biosynthesis; lipid IV(A) biosynthesis; lipid IV(A) from (3R)-3-hydroxytetradecanoyl-[acyl-carrier-protein] and UDP-N-acetyl-alpha-D-glucosamine: step 2/6. Its function is as follows. Catalyzes the hydrolysis of UDP-3-O-myristoyl-N-acetylglucosamine to form UDP-3-O-myristoylglucosamine and acetate, the committed step in lipid A biosynthesis. The polypeptide is UDP-3-O-acyl-N-acetylglucosamine deacetylase (Colwellia psychrerythraea (strain 34H / ATCC BAA-681) (Vibrio psychroerythus)).